The primary structure comprises 225 residues: MMYHIPGVLSPQDVARFREQLEQAEWVDGRVTTGAQGAQVKNNQQVDTRSTLYAALQNEVLNAVNQHALFFAAALPRTLSTPLFNRYQNNETYGFHVDGAVRSHPQSGWMRTDLSATLFLSDPQSYDGGELVVNDTFGQHRVKLPAGDLVLYPSSSLHCVTPVTRGVRVASFMWIQSMIRDDKKRAMLFELDKNIQSLKSRYGENEEILSLLNLYHNLLREWSEI.

The Fe2OG dioxygenase domain occupies 78-177 (TLSTPLFNRY…RVASFMWIQS (100 aa)). Positions 96, 98, and 158 each coordinate Fe cation. Position 168 (R168) interacts with 2-oxoglutarate.

The cofactor is Fe(2+). L-ascorbate serves as cofactor.

The sequence is that of PKHD-type hydroxylase YbiX from Shigella boydii serotype 18 (strain CDC 3083-94 / BS512).